The following is a 342-amino-acid chain: tRNA(Ile)-lysidine synthase (342 aa).

31–36 serves as a coordination point for ATP; that stretch reads SGGQDS.

The protein belongs to the tRNA(Ile)-lysidine synthase family.

It localises to the cytoplasm. It catalyses the reaction cytidine(34) in tRNA(Ile2) + L-lysine + ATP = lysidine(34) in tRNA(Ile2) + AMP + diphosphate + H(+). Its function is as follows. Ligates lysine onto the cytidine present at position 34 of the AUA codon-specific tRNA(Ile) that contains the anticodon CAU, in an ATP-dependent manner. Cytidine is converted to lysidine, thus changing the amino acid specificity of the tRNA from methionine to isoleucine. The polypeptide is tRNA(Ile)-lysidine synthase (Nostoc sp. (strain PCC 7120 / SAG 25.82 / UTEX 2576)).